The sequence spans 350 residues: Protein Wnt-8b (350 aa).

An N-terminal signal peptide occupies residues 1–21 (MFLMKPVCVLLVTCVLHRSHA). An intrachain disulfide couples Cys53 to Cys64. A glycan (N-linked (GlcNAc...) asparagine) is linked at Asn102. 10 disulfides stabilise this stretch: Cys103-Cys111, Cys113-Cys131, Cys179-Cys193, Cys181-Cys188, Cys255-Cys293, Cys271-Cys286, Cys290-Cys332, Cys308-Cys323, Cys310-Cys320, and Cys315-Cys316. The O-palmitoleoyl serine moiety is linked to residue Ser185. Residue Asn258 is glycosylated (N-linked (GlcNAc...) asparagine).

The protein belongs to the Wnt family. Palmitoleoylation is required for efficient binding to frizzled receptors. Depalmitoleoylation leads to Wnt signaling pathway inhibition. Post-translationally, proteolytic processing by TIKI1 and TIKI2 promotes oxidation and formation of large disulfide-bond oligomers, leading to inactivation of WNT8B.

The protein resides in the secreted. Its subcellular location is the extracellular space. The protein localises to the extracellular matrix. Functionally, ligand for members of the frizzled family of seven transmembrane receptors. May play an important role in the development and differentiation of certain forebrain structures, notably the hippocampus. The chain is Protein Wnt-8b (Wnt8b) from Mus musculus (Mouse).